The chain runs to 370 residues: Probable trehalose-phosphate phosphatase J (370 aa).

Belongs to the trehalose phosphatase family. A divalent metal cation serves as cofactor.

It carries out the reaction alpha,alpha-trehalose 6-phosphate + H2O = alpha,alpha-trehalose + phosphate. It functions in the pathway glycan biosynthesis; trehalose biosynthesis. Its function is as follows. Removes the phosphate from trehalose 6-phosphate to produce free trehalose. Trehalose accumulation in plant may improve abiotic stress tolerance. This is Probable trehalose-phosphate phosphatase J (TPPJ) from Arabidopsis thaliana (Mouse-ear cress).